The chain runs to 171 residues: Mitochondrial import inner membrane translocase subunit Tim17-A (171 aa).

An intrachain disulfide couples C9 to C78. 3 helical membrane-spanning segments follow: residues 17-37, 63-77, and 113-133; these read CGGA…FKGF, GGSF…STID, and VGSA…GILL. Residues 147-171 are disordered; the sequence is FAEDHSQLPSSQLPSSPFGDYRQYQ. Residues 153-163 show a composition bias toward low complexity; the sequence is QLPSSQLPSSP.

The protein belongs to the Tim17/Tim22/Tim23 family. As to quaternary structure, component of the TIM23 complex at least composed of TIMM23, TIMM17 (TIMM17A or TIMM17B) and TIMM50. The complex interacts with the TIMM44 component of the PAM complex and with DNAJC15. Post-translationally, degraded by YMEL1 downstream of the integrated stress response (ISR).

It localises to the mitochondrion inner membrane. In terms of biological role, essential component of the TIM23 complex, a complex that mediates the translocation of transit peptide-containing proteins across the mitochondrial inner membrane. The polypeptide is Mitochondrial import inner membrane translocase subunit Tim17-A (Timm17a) (Rattus norvegicus (Rat)).